A 347-amino-acid polypeptide reads, in one-letter code: Phenylalanine--tRNA ligase alpha subunit (347 aa).

A Mg(2+)-binding site is contributed by glutamate 265.

Belongs to the class-II aminoacyl-tRNA synthetase family. Phe-tRNA synthetase alpha subunit type 1 subfamily. As to quaternary structure, tetramer of two alpha and two beta subunits. The cofactor is Mg(2+).

The protein resides in the cytoplasm. The catalysed reaction is tRNA(Phe) + L-phenylalanine + ATP = L-phenylalanyl-tRNA(Phe) + AMP + diphosphate + H(+). The chain is Phenylalanine--tRNA ligase alpha subunit from Wolbachia pipientis subsp. Culex pipiens (strain wPip).